The following is a 231-amino-acid chain: Ribonuclease HII (231 aa).

The RNase H type-2 domain occupies 33–222 (WPVAGADEAG…FREAQEQPLA (190 aa)). 3 residues coordinate a divalent metal cation: Asp39, Glu40, and Asp130.

Belongs to the RNase HII family. Mn(2+) is required as a cofactor. The cofactor is Mg(2+).

It localises to the cytoplasm. The enzyme catalyses Endonucleolytic cleavage to 5'-phosphomonoester.. Functionally, endonuclease that specifically degrades the RNA of RNA-DNA hybrids. This Sinorhizobium fredii (strain NBRC 101917 / NGR234) protein is Ribonuclease HII.